The sequence spans 258 residues: Granzyme K (258 aa).

The signal sequence occupies residues 1-23; that stretch reads MSFSSSALVFLVAGIYMSSESFH. The propeptide at 24–25 is activation peptide; the sequence is TE. The Peptidase S1 domain maps to 26-253; the sequence is IIGGREVQPH…YQTWIKSKLA (228 aa). Cys-51 and Cys-67 are disulfide-bonded. Catalysis depends on charge relay system residues His-66 and Asp-110. 3 disulfides stabilise this stretch: Cys-143–Cys-214, Cys-175–Cys-193, and Cys-204–Cys-228. The active-site Charge relay system is the Ser-208.

It belongs to the peptidase S1 family. Granzyme subfamily. Speen, lungs and liver non-parenchymal cells.

Its subcellular location is the cytoplasmic granule. In Rattus norvegicus (Rat), this protein is Granzyme K (Gzmk).